The chain runs to 296 residues: Diguanylate cyclase DgcS (296 aa).

Residues 165-293 (GSVSLIVLDL…GRNCYKLSPT (129 aa)) enclose the GGDEF domain. Positions 173, 174, and 216 each coordinate Mg(2+). Asp216 is a catalytic residue.

Requires Mg(2+) as cofactor.

The enzyme catalyses 2 GTP = 3',3'-c-di-GMP + 2 diphosphate. Functionally, catalyzes the synthesis of cyclic-di-GMP (c-di-GMP) via the condensation of 2 GTP molecules. May be involved in the regulation of formation of solid surface-associated biofilms and pellicles according to environmental conditions. This chain is Diguanylate cyclase DgcS, found in Shewanella oneidensis (strain ATCC 700550 / JCM 31522 / CIP 106686 / LMG 19005 / NCIMB 14063 / MR-1).